The sequence spans 189 residues: Pyridoxal 5'-phosphate synthase subunit PdxT (189 aa).

46 to 48 (GES) contacts L-glutamine. The active-site Nucleophile is Cys78. Residues Arg107 and 136-137 (IR) contribute to the L-glutamine site. Residues His173 and Glu175 each act as charge relay system in the active site.

This sequence belongs to the glutaminase PdxT/SNO family. In the presence of PdxS, forms a dodecamer of heterodimers. Only shows activity in the heterodimer.

It catalyses the reaction aldehydo-D-ribose 5-phosphate + D-glyceraldehyde 3-phosphate + L-glutamine = pyridoxal 5'-phosphate + L-glutamate + phosphate + 3 H2O + H(+). The catalysed reaction is L-glutamine + H2O = L-glutamate + NH4(+). Its pathway is cofactor biosynthesis; pyridoxal 5'-phosphate biosynthesis. Catalyzes the hydrolysis of glutamine to glutamate and ammonia as part of the biosynthesis of pyridoxal 5'-phosphate. The resulting ammonia molecule is channeled to the active site of PdxS. This chain is Pyridoxal 5'-phosphate synthase subunit PdxT, found in Roseiflexus sp. (strain RS-1).